The primary structure comprises 506 residues: MEACCSDLEVDINGEQTIFLNKQIICAYSGTLRKLLGKSTSSSGNLKVIFNDFPGGAESFEFVSRFCYNDGRVAVMPSNVVFLHCAAKFMEVTKVLEQTEKCMEEIRYWAWPEVLLCLKQCQEVETSPEVDSLAAKLMDALVEKLCLTIEMSPSSAGSACSPDSSLFRFSCDSKSTESFKNCSVRLTWWFDEVLVLSSGLVEMFLKLMVLRKFDNLIISRFLFYYQKVKFCSASSHEKRKILETIIDTLCVLDRSCVPCKSLFAVLRLALGLNINKSCMNKLEVMIGHQLDQATLDNLLVPSPSKSSHLYYVNLVLRFTKAFLDGARSGLQLKKVSSLIDQYIAEVAPDPCLKPSKFLSLITLVPDSARESHEDIYRAIDMYLEAHTGTTDGEKLNLIRTLSYEKLSGESRAHISRNQKFQAIETLDEQQQQQQQQQQQKQLILRMEKVETSGENEKLKEHIEGIQWRVMELERACLKMQNQMEVIKKRSKSSSKGSNRSLPKLCS.

Residues 6 to 76 (SDLEVDINGE…CYNDGRVAVM (71 aa)) form the BTB domain. The NPH3 domain occupies 187 to 435 (TWWFDEVLVL…LDEQQQQQQQ (249 aa)). Positions 421-492 (QAIETLDEQQ…MEVIKKRSKS (72 aa)) form a coiled coil. Residues 485-506 (VIKKRSKSSSKGSNRSLPKLCS) form a disordered region.

This sequence belongs to the NPH3 family.

The protein operates within protein modification; protein ubiquitination. Its function is as follows. May act as a substrate-specific adapter of an E3 ubiquitin-protein ligase complex (CUL3-RBX1-BTB) which mediates the ubiquitination and subsequent proteasomal degradation of target proteins. The protein is BTB/POZ domain-containing protein At3g22104 of Arabidopsis thaliana (Mouse-ear cress).